Reading from the N-terminus, the 702-residue chain is MAGIYLFVVAAALAALGYGALTIKTIMAADAGTARMQEISGAVQEGASAFLNRQYKTIAVVGAVVFVILTALLGISVGFGFLIGAVCSGIAGYVGMYISVRANVRVAAGAQQGLARGLELAFQSGAVTGMLVAGLALLSVAFYYILLVGIGATGRALIDPLVALGFGASLISIFARLGGGIFTKGADVGADLVGKVEAGIPEDDPRNPAVIADNVGDNVGDCAGMAADLFETYAVTVVATMVLASIFFAGVPAMTSMMAYPLAIGGVCILASILGTKFVKLGPKNNIMGALYRGFLVSAGASFVGIILATAIVPGFGDIQGANGVLYSGFDLFLCAVIGLLVTGLLIWVTEYYTGTNFRPVRSVAKASTTGHGTNVIQGLAISMEATALPALIICAAIITTYQLSGLFGIAITVTSMLALAGMVVALDAYGPVTDNAGGIAEMANLPEDVRKTTDALDAVGNTTKAVTKGYAIGSAGLGALVLFAAYTEDLAFFKANVDAYPAFAGVDVNFSLSSPYVVVGLFIGGLLPYLFGSMGMTAVGRAAGSVVEEVRRQFREIPGIMEGTAKPEYGRCVDMLTKAAIKEMIIPSLLPVLAPIVLYFVILGIADKSAAFSALGAMLLGVIVTGLFVAISMTAGGGAWDNAKKYIEDGHYGGKGSEAHKAAVTGDTVGDPYKDTAGPAVNPMIKITNIVALLLLAVLAH.

4 helical membrane-spanning segments follow: residues 3-23, 63-83, 130-150, and 162-182; these read GIYL…ALTI, AVVF…GFLI, MLVA…LVGI, and VALG…GGIF. A substrate-binding site is contributed by K184. Mg(2+) is bound by residues D187, D191, N214, and D217. The next 6 helical transmembrane spans lie at 234–254, 255–275, 294–314, 329–349, 379–399, and 407–427; these read AVTV…VPAM, TSMM…SILG, GFLV…AIVP, GFDL…LIWV, GLAI…AAII, and LFGI…VVAL. D435 contacts Mg(2+). 4 helical membrane-spanning segments follow: residues 466–486, 517–537, 586–606, and 612–632; these read AVTK…LFAA, YVVV…SMGM, IIPS…ILGI, and AFSA…FVAI. Ca(2+) is bound by residues D642, D668, and D672. K675 contributes to the substrate binding site.

The protein belongs to the H(+)-translocating pyrophosphatase (TC 3.A.10) family. K(+)-insensitive subfamily. As to quaternary structure, homodimer. Mg(2+) is required as a cofactor.

The protein resides in the cell inner membrane. It carries out the reaction diphosphate + H2O + H(+)(in) = 2 phosphate + 2 H(+)(out). In terms of biological role, proton pump that utilizes the energy of pyrophosphate hydrolysis as the driving force for proton movement across the membrane. Generates a proton motive force. The sequence is that of K(+)-insensitive pyrophosphate-energized proton pump from Rhodospirillum rubrum (strain ATCC 11170 / ATH 1.1.1 / DSM 467 / LMG 4362 / NCIMB 8255 / S1).